The chain runs to 376 residues: Chaperone protein DnaJ (376 aa).

The J domain occupies 5–72 (DFYEVLGVPK…QKRAAYDQYG (68 aa)). A CR-type zinc finger spans residues 136 to 214 (GKEAQIRIPS…CHGQGRVKKQ (79 aa)). The Zn(2+) site is built by cysteine 149, cysteine 152, cysteine 166, cysteine 169, cysteine 188, cysteine 191, cysteine 202, and cysteine 205. 4 CXXCXGXG motif repeats span residues 149–156 (CETCHGSG), 166–173 (CGTCQGSG), 188–195 (CPHCRGTG), and 202–209 (CTACHGQG). Disordered stretches follow at residues 227-246 (DGMRIRSTGNGEPGTNGGPP) and 352-376 (SLKKGGAKHSPSTESWTDRLKSFFS). A compositionally biased stretch (gly residues) spans 237-246 (GEPGTNGGPP). Residues 367-376 (WTDRLKSFFS) show a composition bias toward basic and acidic residues.

It belongs to the DnaJ family. As to quaternary structure, homodimer. Zn(2+) is required as a cofactor.

The protein localises to the cytoplasm. In terms of biological role, participates actively in the response to hyperosmotic and heat shock by preventing the aggregation of stress-denatured proteins and by disaggregating proteins, also in an autonomous, DnaK-independent fashion. Unfolded proteins bind initially to DnaJ; upon interaction with the DnaJ-bound protein, DnaK hydrolyzes its bound ATP, resulting in the formation of a stable complex. GrpE releases ADP from DnaK; ATP binding to DnaK triggers the release of the substrate protein, thus completing the reaction cycle. Several rounds of ATP-dependent interactions between DnaJ, DnaK and GrpE are required for fully efficient folding. Also involved, together with DnaK and GrpE, in the DNA replication of plasmids through activation of initiation proteins. This is Chaperone protein DnaJ from Acidovorax sp. (strain JS42).